The following is a 360-amino-acid chain: NAD(P)H-quinone oxidoreductase subunit 1, chloroplastic (360 aa).

Transmembrane regions (helical) follow at residues 30–50 (FLPI…LVWL), 98–118 (FSIG…VIPF), 127–147 (FNIG…GLLM), 165–185 (AAQS…ISLL), 203–223 (FWGW…ISSL), 248–268 (YSGI…LISS), 297–317 (IFGT…FLFI), and 340–360 (FLLP…VFSL).

The protein belongs to the complex I subunit 1 family. In terms of assembly, NDH is composed of at least 16 different subunits, 5 of which are encoded in the nucleus.

Its subcellular location is the plastid. The protein localises to the chloroplast thylakoid membrane. The catalysed reaction is a plastoquinone + NADH + (n+1) H(+)(in) = a plastoquinol + NAD(+) + n H(+)(out). The enzyme catalyses a plastoquinone + NADPH + (n+1) H(+)(in) = a plastoquinol + NADP(+) + n H(+)(out). NDH shuttles electrons from NAD(P)H:plastoquinone, via FMN and iron-sulfur (Fe-S) centers, to quinones in the photosynthetic chain and possibly in a chloroplast respiratory chain. The immediate electron acceptor for the enzyme in this species is believed to be plastoquinone. Couples the redox reaction to proton translocation, and thus conserves the redox energy in a proton gradient. The protein is NAD(P)H-quinone oxidoreductase subunit 1, chloroplastic of Aethionema grandiflorum (Persian stone-cress).